A 355-amino-acid polypeptide reads, in one-letter code: Alanine racemase (355 aa).

Catalysis depends on K37, which acts as the Proton acceptor; specific for D-alanine. Position 37 is an N6-(pyridoxal phosphate)lysine (K37). Residue R129 coordinates substrate. Residue Y251 is the Proton acceptor; specific for L-alanine of the active site. M299 contacts substrate.

The protein belongs to the alanine racemase family. Pyridoxal 5'-phosphate serves as cofactor.

The enzyme catalyses L-alanine = D-alanine. The protein operates within amino-acid biosynthesis; D-alanine biosynthesis; D-alanine from L-alanine: step 1/1. Catalyzes the interconversion of L-alanine and D-alanine. May also act on other amino acids. The sequence is that of Alanine racemase (alr) from Deinococcus geothermalis (strain DSM 11300 / CIP 105573 / AG-3a).